The following is a 375-amino-acid chain: uncharacterized protein (375 aa).

The first 20 residues, 1 to 20, serve as a signal peptide directing secretion; it reads MKNKLFIILIIFIILKIVIC. Over 21 to 335 the chain is Extracellular; the sequence is QNTTPSKLIP…EKQVERKITP (315 aa). Residues 30 to 42 show a composition bias toward low complexity; sequence PQQQQKQKQQQTQ. Disordered regions lie at residues 30 to 74 and 113 to 253; these read PQQQ…QPQQ and SQNV…PHNH. Residues 43 to 53 are compositionally biased toward basic residues; that stretch reads PHHHHHHHQQH. A compositionally biased stretch (low complexity) spans 54 to 74; the sequence is QQHQQQHQPNQQIKQQQQPQQ. Residues 120–151 show a composition bias toward basic residues; sequence PPHHTQQRVPHHHGPNGAPHHHGPNGAPHHHG. Residues 168 to 180 are compositionally biased toward polar residues; the sequence is GHNTQGHVQTNHV. The segment covering 181 to 220 has biased composition (low complexity); the sequence is NNINKNNINNNNNNNNNNNNNNNNNNNNNINDNKNIRNNI. A helical membrane pass occupies residues 336-356; sequence IMVLYILLASTMVIQLFIMVF. Residues 357–375 are Cytoplasmic-facing; sequence KQVKHIREINAKTTMESLL.

The protein resides in the membrane. This is an uncharacterized protein from Dictyostelium discoideum (Social amoeba).